Consider the following 632-residue polypeptide: Bifunctional protein GlmU (632 aa).

The interval 1-229 is pyrophosphorylase; the sequence is MAERELSVAI…PQEIVGVNDR (229 aa). UDP-N-acetyl-alpha-D-glucosamine contacts are provided by residues 11-14, lysine 25, glutamine 76, and 81-82; these read LAAG and GT. Aspartate 106 provides a ligand contact to Mg(2+). Positions 143, 158, 173, and 227 each coordinate UDP-N-acetyl-alpha-D-glucosamine. Position 227 (asparagine 227) interacts with Mg(2+). A linker region spans residues 230–250; sequence RQLAQAYQILQDRLKEAWMEA. An N-acetyltransferase region spans residues 251–632; it reads GVTFVDPDSS…ADNSRPKSLQ (382 aa). The UDP-N-acetyl-alpha-D-glucosamine site is built by arginine 332 and lysine 350. Histidine 362 serves as the catalytic Proton acceptor. The UDP-N-acetyl-alpha-D-glucosamine site is built by tyrosine 365 and asparagine 376. Acetyl-CoA contacts are provided by residues alanine 379, 385–386, alanine 422, and arginine 441; that span reads NY. The segment at 600–632 is disordered; sequence VAGDPCWPSPPPQPQQNQQTKPEADNSRPKSLQ. A compositionally biased stretch (basic and acidic residues) spans 621–632; sequence PEADNSRPKSLQ.

This sequence in the N-terminal section; belongs to the N-acetylglucosamine-1-phosphate uridyltransferase family. The protein in the C-terminal section; belongs to the transferase hexapeptide repeat family. In terms of assembly, homotrimer. Mg(2+) is required as a cofactor.

It is found in the cytoplasm. The catalysed reaction is alpha-D-glucosamine 1-phosphate + acetyl-CoA = N-acetyl-alpha-D-glucosamine 1-phosphate + CoA + H(+). It carries out the reaction N-acetyl-alpha-D-glucosamine 1-phosphate + UTP + H(+) = UDP-N-acetyl-alpha-D-glucosamine + diphosphate. Its pathway is nucleotide-sugar biosynthesis; UDP-N-acetyl-alpha-D-glucosamine biosynthesis; N-acetyl-alpha-D-glucosamine 1-phosphate from alpha-D-glucosamine 6-phosphate (route II): step 2/2. It participates in nucleotide-sugar biosynthesis; UDP-N-acetyl-alpha-D-glucosamine biosynthesis; UDP-N-acetyl-alpha-D-glucosamine from N-acetyl-alpha-D-glucosamine 1-phosphate: step 1/1. It functions in the pathway bacterial outer membrane biogenesis; LPS lipid A biosynthesis. Catalyzes the last two sequential reactions in the de novo biosynthetic pathway for UDP-N-acetylglucosamine (UDP-GlcNAc). The C-terminal domain catalyzes the transfer of acetyl group from acetyl coenzyme A to glucosamine-1-phosphate (GlcN-1-P) to produce N-acetylglucosamine-1-phosphate (GlcNAc-1-P), which is converted into UDP-GlcNAc by the transfer of uridine 5-monophosphate (from uridine 5-triphosphate), a reaction catalyzed by the N-terminal domain. This Synechococcus sp. (strain JA-2-3B'a(2-13)) (Cyanobacteria bacterium Yellowstone B-Prime) protein is Bifunctional protein GlmU.